Here is a 428-residue protein sequence, read N- to C-terminus: Adenylosuccinate synthetase 1 (428 aa).

GTP contacts are provided by residues 12 to 18 and 40 to 42; these read GDEGKGK and GHT. The Proton acceptor role is filled by D13. Residues D13 and G40 each contribute to the Mg(2+) site. Residues 13–16, 38–41, T133, R147, N224, T239, and R303 contribute to the IMP site; these read DEGK and NAGH. H41 (proton donor) is an active-site residue. 299-305 contacts substrate; it reads TTTGRRR. Residues R305, 331–333, and 413–415 contribute to the GTP site; these read KLD and GVG.

This sequence belongs to the adenylosuccinate synthetase family. Homodimer. Mg(2+) serves as cofactor.

The protein resides in the cytoplasm. It catalyses the reaction IMP + L-aspartate + GTP = N(6)-(1,2-dicarboxyethyl)-AMP + GDP + phosphate + 2 H(+). Its pathway is purine metabolism; AMP biosynthesis via de novo pathway; AMP from IMP: step 1/2. In terms of biological role, plays an important role in the de novo pathway and in the salvage pathway of purine nucleotide biosynthesis. Catalyzes the first committed step in the biosynthesis of AMP from IMP. In Laccaria bicolor (strain S238N-H82 / ATCC MYA-4686) (Bicoloured deceiver), this protein is Adenylosuccinate synthetase 1.